A 68-amino-acid chain; its full sequence is Probable Sec-independent protein translocase protein TatE (68 aa).

A helical membrane pass occupies residues 1-21 (MGEISITKLLVVAALIILVFG). The disordered stretch occupies residues 43-68 (MNEDDDSAKKTTAEEEAPAQKLSHKE).

Belongs to the TatA/E family. TatE subfamily.

It localises to the cell inner membrane. Functionally, part of the twin-arginine translocation (Tat) system that transports large folded proteins containing a characteristic twin-arginine motif in their signal peptide across membranes. TatE shares overlapping functions with TatA. The polypeptide is Probable Sec-independent protein translocase protein TatE (Klebsiella pneumoniae subsp. pneumoniae (strain ATCC 700721 / MGH 78578)).